We begin with the raw amino-acid sequence, 214 residues long: MTTLLIILAHPHTDDFSWSLATVEEFKKSYQESHPLDKIIIRDLFSEKVPALDNETFAAWKRNKYAPDTLSAEDKNLLHRHEEYLEEFLSADKYVFVNPMYNGFVTAELKQYIDVIAVPRKLFRYTENGPIGLLEGKKSLHIQSAGGFYHNEQDPTHMANDLGAAYIDQTMKMVGLTDENRQQLFVEGYARYPERADELKEKAFTSAENFGKAF.

Residues serine 17–serine 19 and serine 144–glycine 147 contribute to the FMN site.

This sequence belongs to the azoreductase type 1 family. In terms of assembly, homodimer. It depends on FMN as a cofactor.

It carries out the reaction 2 a quinone + NADH + H(+) = 2 a 1,4-benzosemiquinone + NAD(+). The enzyme catalyses N,N-dimethyl-1,4-phenylenediamine + anthranilate + 2 NAD(+) = 2-(4-dimethylaminophenyl)diazenylbenzoate + 2 NADH + 2 H(+). In terms of biological role, quinone reductase that provides resistance to thiol-specific stress caused by electrophilic quinones. Functionally, also exhibits azoreductase activity. Catalyzes the reductive cleavage of the azo bond in aromatic azo compounds to the corresponding amines. The polypeptide is FMN-dependent NADH:quinone oxidoreductase 1 (Lactococcus lactis subsp. lactis (strain IL1403) (Streptococcus lactis)).